The sequence spans 145 residues: D-aminoacyl-tRNA deacylase (145 aa).

The short motif at 137–138 (GP) is the Gly-cisPro motif, important for rejection of L-amino acids element.

This sequence belongs to the DTD family. In terms of assembly, homodimer.

It localises to the cytoplasm. It carries out the reaction glycyl-tRNA(Ala) + H2O = tRNA(Ala) + glycine + H(+). It catalyses the reaction a D-aminoacyl-tRNA + H2O = a tRNA + a D-alpha-amino acid + H(+). An aminoacyl-tRNA editing enzyme that deacylates mischarged D-aminoacyl-tRNAs. Also deacylates mischarged glycyl-tRNA(Ala), protecting cells against glycine mischarging by AlaRS. Acts via tRNA-based rather than protein-based catalysis; rejects L-amino acids rather than detecting D-amino acids in the active site. By recycling D-aminoacyl-tRNA to D-amino acids and free tRNA molecules, this enzyme counteracts the toxicity associated with the formation of D-aminoacyl-tRNA entities in vivo and helps enforce protein L-homochirality. This is D-aminoacyl-tRNA deacylase from Rhodopirellula baltica (strain DSM 10527 / NCIMB 13988 / SH1).